We begin with the raw amino-acid sequence, 352 residues long: Sulfate-binding protein (352 aa).

Residues 1–40 (MARSAFGWGFSVIAVLMVGSITACNTTTTTEPGQGENASQ) form the signal peptide.

This sequence belongs to the prokaryotic sulfate-binding protein family.

Its subcellular location is the periplasm. This protein specifically binds sulfate and is involved in its transmembrane transport. The polypeptide is Sulfate-binding protein (sbpA) (Synechocystis sp. (strain ATCC 27184 / PCC 6803 / Kazusa)).